Here is an 856-residue protein sequence, read N- to C-terminus: Phosphoenolpyruvate synthase (856 aa).

Residue His-433 is the Tele-phosphohistidine intermediate of the active site. Substrate-binding residues include Arg-523, Arg-636, Glu-738, Gly-759, Ser-760, Asn-761, and Asp-762. Glu-738 contacts Mg(2+). Mg(2+) is bound at residue Asp-762. The active-site Proton donor is Cys-809.

It belongs to the PEP-utilizing enzyme family. The cofactor is Mg(2+).

It catalyses the reaction pyruvate + ATP + H2O = phosphoenolpyruvate + AMP + phosphate + 2 H(+). Its pathway is carbohydrate biosynthesis; gluconeogenesis. In terms of biological role, catalyzes the phosphorylation of pyruvate to phosphoenolpyruvate. In Aquifex aeolicus (strain VF5), this protein is Phosphoenolpyruvate synthase (ppsA).